We begin with the raw amino-acid sequence, 205 residues long: Probable inactive peroxygenase-like protein (205 aa).

A Proline-knot motif is present at residues 79–88 (PVQLFGYILP). Ser-183 bears the Phosphoserine mark.

It belongs to the caleosin family.

The protein resides in the lipid droplet. The protein is Probable inactive peroxygenase-like protein of Arabidopsis thaliana (Mouse-ear cress).